Here is a 240-residue protein sequence, read N- to C-terminus: Zein-alpha M6 (240 aa).

The first 21 residues, 1–21 (MATKIFSLLMLLALSTCVANA), serve as a signal peptide directing secretion.

Belongs to the zein family.

Zeins are major seed storage proteins. The chain is Zein-alpha M6 from Zea mays (Maize).